A 387-amino-acid chain; its full sequence is 3-ketoacyl-CoA thiolase (387 aa).

Cysteine 91 serves as the catalytic Acyl-thioester intermediate. Residues histidine 343 and cysteine 373 each act as proton acceptor in the active site.

It belongs to the thiolase-like superfamily. Thiolase family. As to quaternary structure, heterotetramer of two alpha chains (FadB) and two beta chains (FadA).

Its subcellular location is the cytoplasm. The enzyme catalyses an acyl-CoA + acetyl-CoA = a 3-oxoacyl-CoA + CoA. Its pathway is lipid metabolism; fatty acid beta-oxidation. Its function is as follows. Catalyzes the final step of fatty acid oxidation in which acetyl-CoA is released and the CoA ester of a fatty acid two carbons shorter is formed. The sequence is that of 3-ketoacyl-CoA thiolase from Aeromonas salmonicida (strain A449).